Reading from the N-terminus, the 440-residue chain is 23S rRNA (uracil(1939)-C(5))-methyltransferase RlmD (440 aa).

The region spanning 6-64 is the TRAM domain; the sequence is PIHNAQPEQVFIESLDTEGRGIARVEGKVLFVDGALPGERVWARRTQNHKSFDRAELLQ. Residues Cys77, Cys83, Cys86, and Cys164 each contribute to the [4Fe-4S] cluster site. Residues Gln273, Phe302, Asn307, Glu323, Asp351, and Asp372 each coordinate S-adenosyl-L-methionine. Cys397 functions as the Nucleophile in the catalytic mechanism.

It belongs to the class I-like SAM-binding methyltransferase superfamily. RNA M5U methyltransferase family. RlmD subfamily.

It catalyses the reaction uridine(1939) in 23S rRNA + S-adenosyl-L-methionine = 5-methyluridine(1939) in 23S rRNA + S-adenosyl-L-homocysteine + H(+). In terms of biological role, catalyzes the formation of 5-methyl-uridine at position 1939 (m5U1939) in 23S rRNA. The protein is 23S rRNA (uracil(1939)-C(5))-methyltransferase RlmD of Acidithiobacillus ferrooxidans (strain ATCC 23270 / DSM 14882 / CIP 104768 / NCIMB 8455) (Ferrobacillus ferrooxidans (strain ATCC 23270)).